The chain runs to 141 residues: Nucleoside diphosphate kinase (141 aa).

ATP contacts are provided by K11, F59, R87, T93, R104, and N114. Catalysis depends on H117, which acts as the Pros-phosphohistidine intermediate.

Belongs to the NDK family. Homotetramer. Mg(2+) is required as a cofactor.

The protein localises to the cytoplasm. It carries out the reaction a 2'-deoxyribonucleoside 5'-diphosphate + ATP = a 2'-deoxyribonucleoside 5'-triphosphate + ADP. The enzyme catalyses a ribonucleoside 5'-diphosphate + ATP = a ribonucleoside 5'-triphosphate + ADP. Its function is as follows. Major role in the synthesis of nucleoside triphosphates other than ATP. The ATP gamma phosphate is transferred to the NDP beta phosphate via a ping-pong mechanism, using a phosphorylated active-site intermediate. The chain is Nucleoside diphosphate kinase from Ralstonia nicotianae (strain ATCC BAA-1114 / GMI1000) (Ralstonia solanacearum).